The following is a 295-amino-acid chain: Ornithine carbamoyltransferase, catabolic (295 aa).

Residues 49 to 52 (STRT), Q76, R100, and 127 to 130 (HPCQ) each bind carbamoyl phosphate. L-ornithine-binding positions include N155, D213, and 217 to 218 (SM). Carbamoyl phosphate contacts are provided by residues 253 to 254 (CL) and R281.

It belongs to the aspartate/ornithine carbamoyltransferase superfamily. OTCase family. As to quaternary structure, homohexamer.

The protein localises to the cytoplasm. It catalyses the reaction carbamoyl phosphate + L-ornithine = L-citrulline + phosphate + H(+). Its pathway is amino-acid degradation; L-arginine degradation via ADI pathway; carbamoyl phosphate from L-arginine: step 2/2. Its activity is regulated as follows. Arginine lead to a slight activation. Inhibited by all nucleotide phosphates. Reversibly catalyzes the transfer of the carbamoyl group from carbamoyl phosphate (CP) to the N(epsilon) atom of ornithine (ORN) to produce L-citrulline. This is Ornithine carbamoyltransferase, catabolic (arcB) from Halobacterium salinarum (strain ATCC 700922 / JCM 11081 / NRC-1) (Halobacterium halobium).